The chain runs to 195 residues: dCTP deaminase (195 aa).

DCTP-binding positions include 110 to 115 (RSSLAR), D128, 136 to 138 (VLE), Y171, K178, and Q182. E138 (proton donor/acceptor) is an active-site residue. Residues 171–195 (YSSRKDAKYKNQQSAVASRIDEDKE) form a disordered region.

This sequence belongs to the dCTP deaminase family. In terms of assembly, homotrimer.

It carries out the reaction dCTP + H2O + H(+) = dUTP + NH4(+). The protein operates within pyrimidine metabolism; dUMP biosynthesis; dUMP from dCTP (dUTP route): step 1/2. Its function is as follows. Catalyzes the deamination of dCTP to dUTP. In Haemophilus influenzae (strain ATCC 51907 / DSM 11121 / KW20 / Rd), this protein is dCTP deaminase.